Here is a 443-residue protein sequence, read N- to C-terminus: UDP-N-acetylmuramate--L-alanine ligase (443 aa).

Position 110–116 (110–116 (GAHGKTS)) interacts with ATP.

It belongs to the MurCDEF family.

It localises to the cytoplasm. It carries out the reaction UDP-N-acetyl-alpha-D-muramate + L-alanine + ATP = UDP-N-acetyl-alpha-D-muramoyl-L-alanine + ADP + phosphate + H(+). The protein operates within cell wall biogenesis; peptidoglycan biosynthesis. Cell wall formation. The polypeptide is UDP-N-acetylmuramate--L-alanine ligase (Streptococcus equi subsp. zooepidemicus (strain H70)).